The primary structure comprises 746 residues: 4-hydroxy-3-methylbut-2-en-1-yl diphosphate synthase (flavodoxin) (746 aa).

Residues C653, C656, C687, and E694 each coordinate [4Fe-4S] cluster.

The protein belongs to the IspG family. Requires [4Fe-4S] cluster as cofactor.

The catalysed reaction is (2E)-4-hydroxy-3-methylbut-2-enyl diphosphate + oxidized [flavodoxin] + H2O + 2 H(+) = 2-C-methyl-D-erythritol 2,4-cyclic diphosphate + reduced [flavodoxin]. The protein operates within isoprenoid biosynthesis; isopentenyl diphosphate biosynthesis via DXP pathway; isopentenyl diphosphate from 1-deoxy-D-xylulose 5-phosphate: step 5/6. In terms of biological role, converts 2C-methyl-D-erythritol 2,4-cyclodiphosphate (ME-2,4cPP) into 1-hydroxy-2-methyl-2-(E)-butenyl 4-diphosphate. This chain is 4-hydroxy-3-methylbut-2-en-1-yl diphosphate synthase (flavodoxin), found in Chlorobaculum tepidum (strain ATCC 49652 / DSM 12025 / NBRC 103806 / TLS) (Chlorobium tepidum).